The following is a 280-amino-acid chain: Phosphatidylserine decarboxylase proenzyme (280 aa).

Active-site charge relay system; for autoendoproteolytic cleavage activity residues include aspartate 88, histidine 145, and serine 248. Serine 248 (schiff-base intermediate with substrate; via pyruvic acid; for decarboxylase activity) is an active-site residue. Pyruvic acid (Ser); by autocatalysis is present on serine 248.

This sequence belongs to the phosphatidylserine decarboxylase family. PSD-B subfamily. Prokaryotic type I sub-subfamily. Heterodimer of a large membrane-associated beta subunit and a small pyruvoyl-containing alpha subunit. Pyruvate serves as cofactor. In terms of processing, is synthesized initially as an inactive proenzyme. Formation of the active enzyme involves a self-maturation process in which the active site pyruvoyl group is generated from an internal serine residue via an autocatalytic post-translational modification. Two non-identical subunits are generated from the proenzyme in this reaction, and the pyruvate is formed at the N-terminus of the alpha chain, which is derived from the carboxyl end of the proenzyme. The autoendoproteolytic cleavage occurs by a canonical serine protease mechanism, in which the side chain hydroxyl group of the serine supplies its oxygen atom to form the C-terminus of the beta chain, while the remainder of the serine residue undergoes an oxidative deamination to produce ammonia and the pyruvoyl prosthetic group on the alpha chain. During this reaction, the Ser that is part of the protease active site of the proenzyme becomes the pyruvoyl prosthetic group, which constitutes an essential element of the active site of the mature decarboxylase.

Its subcellular location is the cell membrane. The enzyme catalyses a 1,2-diacyl-sn-glycero-3-phospho-L-serine + H(+) = a 1,2-diacyl-sn-glycero-3-phosphoethanolamine + CO2. It functions in the pathway phospholipid metabolism; phosphatidylethanolamine biosynthesis; phosphatidylethanolamine from CDP-diacylglycerol: step 2/2. In terms of biological role, catalyzes the formation of phosphatidylethanolamine (PtdEtn) from phosphatidylserine (PtdSer). The protein is Phosphatidylserine decarboxylase proenzyme of Methylobacillus flagellatus (strain ATCC 51484 / DSM 6875 / VKM B-1610 / KT).